The primary structure comprises 554 residues: HMG box-containing protein 4 (554 aa).

2 disordered regions span residues 15 to 368 (GTED…AYQV) and 417 to 469 (HKQN…PAKV). The span at 75–88 (SSDDYHADHSTDSA) shows a compositional bias: basic and acidic residues. Positions 95 to 105 (SLPSPSSSDTA) are enriched in low complexity. Residues 113-123 (TSPQADTSTTH) show a composition bias toward polar residues. 2 stretches are compositionally biased toward basic and acidic residues: residues 145 to 154 (PHKDYHKKSG) and 217 to 226 (LGREEIESRS). The span at 236-251 (YTPRSGGTPDSASSTG) shows a compositional bias: polar residues. Positions 268 to 296 (MKKKKKSKKSKKKKDKHKDEKHKKHSKSK) are enriched in basic residues. A compositionally biased stretch (pro residues) spans 313-332 (LPSPPPPPATTPPTSPPSIP). Positions 341 to 357 (HTEEQSDKKKKKEDPEK) are enriched in basic and acidic residues. The segment at residues 359–427 (KKKNMSAYQV…KQNKAEATTV (69 aa)) is a DNA-binding region (HMG box). Composition is skewed to low complexity over residues 433-445 (SSES…GSSS) and 454-467 (SPTS…TSPA).

Interacts with nlk.2.

Its subcellular location is the nucleus. Functionally, negatively regulates Wnt/beta-catenin signaling during development. This Xenopus laevis (African clawed frog) protein is HMG box-containing protein 4 (hmgxb4).